The following is a 203-amino-acid chain: RNA annealing protein YRA2 (203 aa).

Methionine 1 carries the N-acetylmethionine modification. Disordered regions lie at residues 1–60 and 137–203; these read MDKA…REEP and QPQR…YMKG. Over residues 11–20 the composition is skewed to polar residues; sequence NSHTDSSSNH. A compositionally biased stretch (basic and acidic residues) spans 47–60; that stretch reads SRSKDRLYREREEP. Residues 64–138 form the RRM domain; sequence KRIRISKIPL…AKIEVEIYQP (75 aa). Basic residues predominate over residues 139–153; it reads QRKHSRMNAHNRRKQ. Residues 154-164 show a composition bias toward basic and acidic residues; it reads TAQEHGRDRPG. The segment covering 165–180 has biased composition (basic residues); it reads SHYRQKPNRVSKKNKG.

It belongs to the YRA1 family. In terms of assembly, associates with mRNPs. Interacts with YRA1.

Its subcellular location is the nucleus. Involved in export of poly(A) mRNAs from the nucleus. Recruited to the coding sequences as well as poly-A sites of active genes. The sequence is that of RNA annealing protein YRA2 (YRA2) from Saccharomyces cerevisiae (strain YJM789) (Baker's yeast).